The sequence spans 348 residues: MKTLVLLLCFTLLWGCQSAPQGTGLGFREVACDDPEVEQVALTAVDYLNQHLLQGFKHILNQIDKVKVWSRRPFGEVYELELDTLETTCHALDPTPLANCSVRQLAQHAVEGDCDFHILKQDGQFSVMHTKCHSNPDSAEDVRKVCPHCALLTPFNSSNVVYAVNAALGAFNEKNNKTYFKLVELARAQTVPFPPSTHVEFVIAATDCAAPKVADPAKCNLLAEKQYSFCKASLFQNLGGEEVTVTCTAFPTQANGVTPASPAPAVEKGIPVALPDAPPASLVVGPMVVPAEHLPHKTHHDLRHAFSPVASVESASGEAFQSPTQAGNAGAAGPAVPLCPGRVRHFKI.

Positions 1-18 (MKTLVLLLCFTLLWGCQS) are cleaved as a signal peptide. The Cystatin fetuin-A-type 1 domain maps to 19–133 (APQGTGLGFR…QFSVMHTKCH (115 aa)). 6 disulfide bridges follow: Cys32-Cys339, Cys89-Cys100, Cys114-Cys132, Cys146-Cys149, Cys208-Cys219, and Cys230-Cys247. Asn99 carries an N-linked (GlcNAc...) asparagine glycan. Phosphoserine occurs at positions 134 and 138. In terms of domain architecture, Cystatin fetuin-A-type 2 spans 144–255 (KVCPHCALLT…TCTAFPTQAN (112 aa)). N-linked (GlcNAc...) asparagine glycans are attached at residues Asn156 and Asn176. Phosphoserine occurs at positions 307, 311, 314, and 316.

This sequence belongs to the fetuin family. In terms of processing, phosphorylated by FAM20C in the extracellular medium. Expressed by the liver and secreted in plasma.

The protein localises to the secreted. The chain is Alpha-2-HS-glycoprotein (AHSG) from Meriones unguiculatus (Mongolian jird).